We begin with the raw amino-acid sequence, 324 residues long: 2-oxoisovalerate dehydrogenase subunit beta (324 aa).

Thiamine diphosphate is bound by residues Glu-29, 58-60 (LSE), Gln-82, and 86-89 (YIFP). Residues 83 to 86 (FADY) and His-129 contribute to the substrate site. Catalysis depends on His-129, which acts as the Proton acceptor.

Heterotetramer of two alpha and two beta chains. Directly associated with ODBA in the E1 complex. Thiamine diphosphate is required as a cofactor.

It carries out the reaction N(6)-[(R)-lipoyl]-L-lysyl-[protein] + 3-methyl-2-oxobutanoate + H(+) = N(6)-[(R)-S(8)-2-methylpropanoyldihydrolipoyl]-L-lysyl-[protein] + CO2. The branched-chain alpha-keto dehydrogenase complex catalyzes the overall conversion of alpha-keto acids to acyl-CoA and CO(2). It contains multiple copies of three enzymatic components: branched-chain alpha-keto acid decarboxylase (E1), lipoamide acyltransferase (E2) and lipoamide dehydrogenase (E3). The protein is 2-oxoisovalerate dehydrogenase subunit beta of Thermus thermophilus (strain ATCC BAA-163 / DSM 7039 / HB27).